The following is a 270-amino-acid chain: 3-methyl-2-oxobutanoate hydroxymethyltransferase (270 aa).

Mg(2+)-binding residues include aspartate 41 and aspartate 80. 3-methyl-2-oxobutanoate is bound by residues 41–42, aspartate 80, and lysine 109; that span reads DS. Glutamate 111 serves as a coordination point for Mg(2+). Residue glutamate 178 is the Proton acceptor of the active site.

Belongs to the PanB family. As to quaternary structure, homodecamer; pentamer of dimers. It depends on Mg(2+) as a cofactor.

Its subcellular location is the cytoplasm. The catalysed reaction is 3-methyl-2-oxobutanoate + (6R)-5,10-methylene-5,6,7,8-tetrahydrofolate + H2O = 2-dehydropantoate + (6S)-5,6,7,8-tetrahydrofolate. It participates in cofactor biosynthesis; (R)-pantothenate biosynthesis; (R)-pantoate from 3-methyl-2-oxobutanoate: step 1/2. Its function is as follows. Catalyzes the reversible reaction in which hydroxymethyl group from 5,10-methylenetetrahydrofolate is transferred onto alpha-ketoisovalerate to form ketopantoate. The sequence is that of 3-methyl-2-oxobutanoate hydroxymethyltransferase from Thermotoga sp. (strain RQ2).